A 501-amino-acid polypeptide reads, in one-letter code: Membrane-bound lytic murein transglycosylase F (501 aa).

Positions 1–29 are cleaved as a signal peptide; that stretch reads MTKILLNTASTVLTRLWKLSLLGLVFAVA. The tract at residues 30 to 274 is non-LT domain; the sequence is AATLVSSRIP…DAMETFYGHL (245 aa). Positions 275–501 are LT domain; that stretch reads GEIDYSGAIL…VKSISGTSSL (227 aa). Glutamate 321 is a catalytic residue.

It in the N-terminal section; belongs to the bacterial solute-binding protein 3 family. This sequence in the C-terminal section; belongs to the transglycosylase Slt family.

The protein localises to the cell outer membrane. It carries out the reaction Exolytic cleavage of the (1-&gt;4)-beta-glycosidic linkage between N-acetylmuramic acid (MurNAc) and N-acetylglucosamine (GlcNAc) residues in peptidoglycan, from either the reducing or the non-reducing ends of the peptidoglycan chains, with concomitant formation of a 1,6-anhydrobond in the MurNAc residue.. Functionally, murein-degrading enzyme that degrades murein glycan strands and insoluble, high-molecular weight murein sacculi, with the concomitant formation of a 1,6-anhydromuramoyl product. Lytic transglycosylases (LTs) play an integral role in the metabolism of the peptidoglycan (PG) sacculus. Their lytic action creates space within the PG sacculus to allow for its expansion as well as for the insertion of various structures such as secretion systems and flagella. The chain is Membrane-bound lytic murein transglycosylase F from Saccharophagus degradans (strain 2-40 / ATCC 43961 / DSM 17024).